A 282-amino-acid chain; its full sequence is Uracil-DNA glycosylase (282 aa).

Residues 15–40 (SAASKRKSASNTENIPEKVPAGNENQ) form a disordered region. Aspartate 123 functions as the Proton acceptor in the catalytic mechanism.

Belongs to the uracil-DNA glycosylase (UDG) superfamily. UNG family.

The protein localises to the mitochondrion. It is found in the nucleus. It carries out the reaction Hydrolyzes single-stranded DNA or mismatched double-stranded DNA and polynucleotides, releasing free uracil.. With respect to regulation, inhibited by UGI, a B.subtilis bacteriophage PBS2 peptide inhibitor. Excises uracil residues from the DNA which can arise as a result of misincorporation of dUMP residues by DNA polymerase or due to deamination of cytosine. This chain is Uracil-DNA glycosylase, found in Caenorhabditis elegans.